A 211-amino-acid polypeptide reads, in one-letter code: Transcription antitermination protein NusB (211 aa).

The protein belongs to the NusB family.

In terms of biological role, involved in transcription antitermination. Required for transcription of ribosomal RNA (rRNA) genes. Binds specifically to the boxA antiterminator sequence of the ribosomal RNA (rrn) operons. The polypeptide is Transcription antitermination protein NusB (Trichormus variabilis (strain ATCC 29413 / PCC 7937) (Anabaena variabilis)).